Here is a 303-residue protein sequence, read N- to C-terminus: Probable 5-dehydro-4-deoxyglucarate dehydratase (303 aa).

It belongs to the DapA family.

It carries out the reaction 5-dehydro-4-deoxy-D-glucarate + H(+) = 2,5-dioxopentanoate + CO2 + H2O. Its pathway is carbohydrate acid metabolism; D-glucarate degradation; 2,5-dioxopentanoate from D-glucarate: step 2/2. This Delftia acidovorans (strain DSM 14801 / SPH-1) protein is Probable 5-dehydro-4-deoxyglucarate dehydratase.